We begin with the raw amino-acid sequence, 230 residues long: Voltage-gated hydrogen channel 1 (230 aa).

The Cytoplasmic segment spans residues 1–58; sequence MAGCLRHFTSVGDDTKKKAWKEEDVEVAHEEEPKNTPHPFIASYSFRGALKWLFSSHK. The helical transmembrane segment at 59–79 threads the bilayer; that stretch reads FQIVIICLVILDALFVLVEVL. At 80–96 the chain is on the extracellular side; that stretch reads LDLELLAEKVDHIIPEI. Residues 97 to 119 form a helical membrane-spanning segment; that stretch reads FHYLSISVLSFFILEIAGKLYAF. At 120-127 the chain is on the cytoplasmic side; the sequence is RLEFFHHK. The chain crosses the membrane as a helical span at residues 128–148; sequence FEVFDAAIVVISFIIDIVYIS. The Extracellular segment spans residues 149-155; the sequence is REDIFNA. The chain crosses the membrane as a helical span at residues 156–176; it reads VGLLILLRLWRVARIVNGIIV. Residues 177-226 adopt a coiled-coil conformation; the sequence is SVKTQAEDKIHRLKENQESLLEKVAHLEQQCAQQEQEIVRLQTLLQQHNV. The Cytoplasmic portion of the chain corresponds to 177–230; the sequence is SVKTQAEDKIHRLKENQESLLEKVAHLEQQCAQQEQEIVRLQTLLQQHNVFPAS.

This sequence belongs to the hydrogen channel family. In terms of assembly, homodimer.

The protein localises to the membrane. It localises to the cell membrane. Functionally, mediates the voltage-dependent proton permeability of excitable membranes. Forms a proton-selective channel through which protons may pass in accordance with their electrochemical gradient. The protein is Voltage-gated hydrogen channel 1 (hvcn1) of Xenopus tropicalis (Western clawed frog).